The following is a 228-amino-acid chain: Protein Thf1 (228 aa).

Residues Ile201–Ala223 adopt a coiled-coil conformation. The interval Asp209 to Gly228 is disordered.

The protein belongs to the THF1 family.

Functionally, may be involved in photosynthetic membrane biogenesis. The chain is Protein Thf1 from Gloeobacter violaceus (strain ATCC 29082 / PCC 7421).